The following is a 261-amino-acid chain: 5'-nucleotidase SurE (261 aa).

Asp-18, Asp-19, Ser-50, and Asn-102 together coordinate a divalent metal cation.

Belongs to the SurE nucleotidase family. The cofactor is a divalent metal cation.

Its subcellular location is the cytoplasm. It carries out the reaction a ribonucleoside 5'-phosphate + H2O = a ribonucleoside + phosphate. Functionally, nucleotidase that shows phosphatase activity on nucleoside 5'-monophosphates. This is 5'-nucleotidase SurE from Rhodospirillum rubrum (strain ATCC 11170 / ATH 1.1.1 / DSM 467 / LMG 4362 / NCIMB 8255 / S1).